We begin with the raw amino-acid sequence, 304 residues long: Germ cell-specific gene 1-like protein (304 aa).

At 1 to 8 (MKTTRKCR) the chain is on the cytoplasmic side. A helical transmembrane segment spans residues 9–29 (ALLSVGLNLLALLFSTTAFIT). Residues 30–112 (TYWCEGTQRV…FIDLAPASER (83 aa)) are Extracellular-facing. The chain crosses the membrane as a helical span at residues 113-133 (GVLWLSVVSEVLYIMLLVVGF). At 134–153 (SLMCLELFHSSNVIDGLKLN) the chain is on the cytoplasmic side. The chain crosses the membrane as a helical span at residues 154 to 174 (AFAAVFTVLSGLLGMVAHMMY). Topologically, residues 175 to 197 (TQVFQITVSLGPEDWRPHTWDYG) are extracellular. Residues 198-218 (WSFCMAWGSFTCCMAASVTTL) form a helical membrane-spanning segment. At 219-304 (NSYTKTVIEF…NTESLGEEQC (86 aa)) the chain is on the cytoplasmic side. Residues 266–278 (VDVYPSHGSSHGN) are compositionally biased toward polar residues. Residues 266-304 (VDVYPSHGSSHGNSRGKMRSPPAPVDQGDNTESLGEEQC) form a disordered region.

It belongs to the GSG1 family. In terms of assembly, component of the AMPAR complex.

Its subcellular location is the cell membrane. It localises to the synapse. Its function is as follows. As a component of the AMPAR complex, modifies AMPA receptor (AMPAR) gating. This is Germ cell-specific gene 1-like protein (gsg1l) from Danio rerio (Zebrafish).